A 404-amino-acid chain; its full sequence is MKRTIIMMLDSFGVGASADAASFGDVGSDTFGHIAKACAEGKADIGREGPLKLPNLARLGLGHAAMESTGAFAPGFGDNVELIGAYGHAQELSSGKDTPSGHWEMAGVPVLFEWGYFSEHQNSFPKELTDKILARAGLDGFLGNCHASGTTILEELGEEHMRSGKPIFYTSADSVFQIACHEETFGLDNLYRLCEITREELEPYNIGRVIARPFDGTGPSDFARTGNRKDYSLEPPAKTVLDKLKEAGGEVVSVGKIADIYAYCGITKKVKANGLEALFDATLAEVKSAGDNTIVFTNFVDFDSHYGHRRDVAGYAKGLEYFDARLPEMLALLGEDDLLILTADHGCDPTWQGTDHTREYVPVLAFGAGLKAGSLGRRKSFADIGQSIASHFKLEPMAYGESFL.

Mn(2+) is bound by residues Asp-10, Asp-303, His-308, Asp-344, His-345, and His-356.

It belongs to the phosphopentomutase family. Mn(2+) serves as cofactor.

It localises to the cytoplasm. It carries out the reaction 2-deoxy-alpha-D-ribose 1-phosphate = 2-deoxy-D-ribose 5-phosphate. The catalysed reaction is alpha-D-ribose 1-phosphate = D-ribose 5-phosphate. It participates in carbohydrate degradation; 2-deoxy-D-ribose 1-phosphate degradation; D-glyceraldehyde 3-phosphate and acetaldehyde from 2-deoxy-alpha-D-ribose 1-phosphate: step 1/2. Functionally, isomerase that catalyzes the conversion of deoxy-ribose 1-phosphate (dRib-1-P) and ribose 1-phosphate (Rib-1-P) to deoxy-ribose 5-phosphate (dRib-5-P) and ribose 5-phosphate (Rib-5-P), respectively. This is Phosphopentomutase from Shewanella baltica (strain OS185).